The sequence spans 421 residues: UDP-N-acetylglucosamine 1-carboxyvinyltransferase (421 aa).

22–23 (KN) is a binding site for phosphoenolpyruvate. R93 is a UDP-N-acetyl-alpha-D-glucosamine binding site. C117 serves as the catalytic Proton donor. C117 bears the 2-(S-cysteinyl)pyruvic acid O-phosphothioketal mark. UDP-N-acetyl-alpha-D-glucosamine-binding positions include 122–126 (RPVDL), D308, and V330.

The protein belongs to the EPSP synthase family. MurA subfamily.

Its subcellular location is the cytoplasm. It catalyses the reaction phosphoenolpyruvate + UDP-N-acetyl-alpha-D-glucosamine = UDP-N-acetyl-3-O-(1-carboxyvinyl)-alpha-D-glucosamine + phosphate. The protein operates within cell wall biogenesis; peptidoglycan biosynthesis. Its function is as follows. Cell wall formation. Adds enolpyruvyl to UDP-N-acetylglucosamine. This chain is UDP-N-acetylglucosamine 1-carboxyvinyltransferase, found in Azotobacter vinelandii (strain DJ / ATCC BAA-1303).